Consider the following 220-residue polypeptide: Chloramphenicol acetyltransferase (220 aa).

His187 serves as the catalytic Proton acceptor.

It belongs to the chloramphenicol acetyltransferase family. As to quaternary structure, homotrimer.

It carries out the reaction chloramphenicol + acetyl-CoA = chloramphenicol 3-acetate + CoA. Its function is as follows. This enzyme is an effector of chloramphenicol resistance in bacteria. This Bacillus pumilus (Bacillus mesentericus) protein is Chloramphenicol acetyltransferase (cat86).